Here is a 1249-residue protein sequence, read N- to C-terminus: MHLFKRIALTLWLIISSTLAVVITEDRVDRGTISVNLGEVTVNSGASWSIINNAVTAFAGKINVQSGGGLYISSTSPLLALQVTLTSLLDSITNDGVISLDSRASLTASNYNLIGLSFTNNGEMYLAASGVLPSTMDLTAASWTNNGLIVAYQNQRSSGVLNLGTPLGAITNNGQICLYNQVYQQQTRIEGSGCITANKNSAIYISNAVLPVATTQNFYLQDSKSSMIVQAVSSTQTFNVYGFGNGNKIGITLPAVGIPPNPAYSYDVDTGILTVRAGLLSQKFNIGLGYYSLFFSVVTDNGAGLPSTILGSISYSGPVPSRNLPASCKIACKPVPTAPGTNPTEYTTTITTTNSAGNPLTETGVVDISTDSNGSWFTTTSIFPTTSQSSSSETVASSSQPDSSSTEPSAFPSSTGDSSAEPSITSDYSSSELSVVPSSASESASESSAEPSSASESASESGSESVASETSASESASEQSSTSESVSSEFASSDSSSEPSSASESSVESSSASEFVVPSSATETSVSESASESSAEPSSASESVASESAVSETSASESAAPSSASETSVSESAASSSASESFASESSVESSAVPSSASEFSTSESVASETPASETPASETPASESASEQSSTSESSAEISSASESSAEPSSAKSAISESASEFSAAPSSASQSSASQSSTNESSSQQSSAESSSTGTSSVSASAATSEYTATWTTTNSDGSVSTESGIISQSGSSFTTITTFVPDATSEYTTTWTTTNSDGSVSTESGIVSQSGSSFTTITTFAPDATSEYTTTWTTTNSDGSVSTESGVVSQSGTSLTTITTFAPDVTSEYTTTWTTTNSDGSVSTESGIVSQSGSSFTTITTFEPPVVCKRDDVNCGSSIGLSTPYYGNSSQPLSSTKMTDTSATQTVDSSLSSITDATTTQSVNSLETPVPTSGSGNGSNNGSDNGSNNGSNNGSNNGSGSGNGSNNGSNNGSGSGNGFNNGSDNGSNNGSGNASNNGSASGSGSDNGSDNGSDNGSDNGSNNGSNTDNGSNSGSDSGNGIDNGSGNGSSDGSDNGTTNGSGSGGESNNGSGNGSDNGSSPDNGSNNGSNNGSNNGSGDGIGTGSNSDTDNGSGNGSNNGSGSVNGSANGSGNGSNNGSNSGSNSDNGSNNSSGNGSSSDLGSVSGTGNGSNEGSSNESGANNGSNNGAGALPAATLSVVPSPSADSGSTSSASAMVIPNTNGSGKLLNGKVLTLSVLSSMVVVFL.

Positions 1–20 are cleaved as a signal peptide; it reads MHLFKRIALTLWLIISSTLA. Asparagine 373 carries N-linked (GlcNAc...) asparagine glycosylation. The span at 383–415 shows a compositional bias: low complexity; the sequence is FPTTSQSSSSETVASSSQPDSSSTEPSAFPSST. Disordered regions lie at residues 383–729 and 883–1217; these read FPTT…SGII and GLST…SSAS. Residues 416–428 are compositionally biased toward polar residues; it reads GDSSAEPSITSDY. Residues 429–716 show a composition bias toward low complexity; it reads SSSELSVVPS…SEYTATWTTT (288 aa). Asparagine 681 carries N-linked (GlcNAc...) asparagine glycosylation. Composition is skewed to polar residues over residues 717 to 729 and 883 to 935; these read NSDG…SGII and GLST…PVPT. 45 N-linked (GlcNAc...) asparagine glycosylation sites follow: asparagine 891, asparagine 940, asparagine 944, asparagine 948, asparagine 952, asparagine 956, asparagine 960, asparagine 966, asparagine 970, asparagine 974, asparagine 984, asparagine 988, asparagine 992, asparagine 996, asparagine 1000, asparagine 1010, asparagine 1014, asparagine 1018, asparagine 1022, asparagine 1026, asparagine 1032, asparagine 1046, asparagine 1050, asparagine 1058, asparagine 1062, asparagine 1072, asparagine 1076, asparagine 1080, asparagine 1086, asparagine 1090, asparagine 1094, asparagine 1098, asparagine 1114, asparagine 1118, asparagine 1122, asparagine 1128, asparagine 1132, asparagine 1136, asparagine 1140, asparagine 1150, asparagine 1154, asparagine 1158, asparagine 1172, asparagine 1180, and asparagine 1186. A compositionally biased stretch (low complexity) spans 941–959; it reads GSNNGSDNGSNNGSNNGSN. Over residues 960–982 the composition is skewed to gly residues; it reads NGSGSGNGSNNGSNNGSGSGNGF. Over residues 983–1043 the composition is skewed to low complexity; sequence NNGSDNGSNN…SNSGSDSGNG (61 aa). The segment covering 1062-1078 has biased composition (gly residues); the sequence is NGSGSGGESNNGSGNGS. The span at 1079–1097 shows a compositional bias: low complexity; sequence DNGSSPDNGSNNGSNNGSN. A compositionally biased stretch (low complexity) spans 1139-1167; that stretch reads NNGSNSGSNSDNGSNNSSGNGSSSDLGSV. Composition is skewed to low complexity over residues 1175-1194 and 1205-1217; these read NEGS…GAGA and SPSA…SSAS. The N-linked (GlcNAc...) asparagine glycan is linked to asparagine 1225. A lipid anchor (GPI-anchor amidated asparagine) is attached at asparagine 1225. Positions 1226 to 1249 are cleaved as a propeptide — removed in mature form; it reads GSGKLLNGKVLTLSVLSSMVVVFL.

This sequence belongs to the HYR1/IFF family. The GPI-anchor is attached to the protein in the endoplasmic reticulum and serves to target the protein to the cell surface. There, the glucosamine-inositol phospholipid moiety is cleaved off and the GPI-modified mannoprotein is covalently attached via its lipidless GPI glycan remnant to the 1,6-beta-glucan of the outer cell wall layer.

Its subcellular location is the secreted. The protein localises to the cell wall. It localises to the membrane. GPI-anchored cell wall protein involved in cell wall organization, hyphal growth, as well as in host-fungal interaction and virulence. The protein is Hyphally regulated cell wall protein 3 (HYR3) of Candida albicans (strain SC5314 / ATCC MYA-2876) (Yeast).